A 489-amino-acid polypeptide reads, in one-letter code: MLFKMRSFVAFVLLLSWFGSCCSLKDQAVDFLKSEDSLKKDLSSDEDSTYLKAFGFHRKTLVRNPYKDLPSRKDRKNRVVAATTTPSSSPEPAPKHVSTKASTVSEPQKRSSTQDVSPSPSAPLANSPIPRNSHSSVPLVVGCVGGAFFLLLVATGLYFFTSKAGKTVNPWRTGLSGQLQKVFVTGIPVLKRSEIEAACEDFSNVIGSCPIGKLFKGTLSSGVEIAVASFATTTAKDWKDSTEIHFRKKIEMLSKINHKNFANLLGYCEEKEPFTRILIFEYAPNGSLFEHLHYKESEHLDWGMRLRIAMGLAYCLDHMHQLNPPIAHTNLVSSSLQLTEDYAVKVSDFSFGSSETETNINNNTVIDTHISALNPEDNIYSFGLLLFEMITGKLIESVNKPDSVDSSLVDFLRGETLAKMVDPTLESYDAKIENIGEVIKSCLRTDPKERPTMQEVTGWLREITGLSPNDATPKLSPLWWAELEVLSTA.

A signal peptide spans 1-23; sequence MLFKMRSFVAFVLLLSWFGSCCS. Over 24-139 the chain is Extracellular; it reads LKDQAVDFLK…PRNSHSSVPL (116 aa). Residues 67 to 130 are disordered; sequence KDLPSRKDRK…SAPLANSPIP (64 aa). A compositionally biased stretch (low complexity) spans 81 to 90; it reads AATTTPSSSP. Polar residues predominate over residues 99–116; that stretch reads TKASTVSEPQKRSSTQDV. Low complexity predominate over residues 117–130; sequence SPSPSAPLANSPIP. The helical transmembrane segment at 140 to 160 threads the bilayer; it reads VVGCVGGAFFLLLVATGLYFF. The Cytoplasmic portion of the chain corresponds to 161 to 489; sequence TSKAGKTVNP…WAELEVLSTA (329 aa). Residues 200-460 form the Protein kinase domain; it reads EDFSNVIGSC…PTMQEVTGWL (261 aa).

Belongs to the protein kinase superfamily. Ser/Thr protein kinase family.

The protein resides in the cell membrane. This Arabidopsis thaliana (Mouse-ear cress) protein is Inactive receptor-like serine/threonine-protein kinase At2g40270.